The primary structure comprises 132 residues: MSHDTIADMISLVRNANMRKAVKVRVPATGITQNIVKILLQEGFIKDYMKQEKRTRSFFILTLKYQGRVRKPHITAFKRISKPSLRIYSNYQKITRILGGMGIAIISTSSGIMTDREARQKRLGGEIICHVW.

This sequence belongs to the universal ribosomal protein uS8 family. As to quaternary structure, part of the 30S ribosomal subunit.

The protein resides in the plastid. It is found in the chloroplast. One of the primary rRNA binding proteins, it binds directly to 16S rRNA central domain where it helps coordinate assembly of the platform of the 30S subunit. This is Small ribosomal subunit protein uS8c (rps8) from Psilotum nudum (Whisk fern).